The following is a 333-amino-acid chain: cGAMP-activated phospholipase (333 aa).

The region spanning 10–191 (LALSGGGYRG…VGNAPGLFGL (182 aa)) is the PNPLA domain. Positions 14–19 (GGGYRG) match the GXGXXG motif. The short motif at 46 to 50 (GTSAG) is the GXSXG element. The active-site Nucleophile is Ser48. Asp178 (proton acceptor) is an active-site residue. A DGA/G motif is present at residues 178–180 (DGG).

Belongs to the patatin family.

It carries out the reaction a 1,2-diacyl-sn-glycero-3-phosphocholine + H2O = a 2-acyl-sn-glycero-3-phosphocholine + a fatty acid + H(+). The enzyme catalyses 1,2-di-(9Z-octadecenoyl)-sn-glycero-3-phosphoethanolamine + 2 H2O = sn-glycero-3-phosphoethanolamine + 2 (9Z)-octadecenoate + 2 H(+). Its activity is regulated as follows. Phospholipase activity is specifically activated upon cGAMP binding, which is produced by the cognate cyclic nucleotide synthase encoded in the same operon. Is not activated by cyclic dinucleotides 2',3'-cGAMP, c-diAMP or 3',3'-c-diGMP. Its function is as follows. Effector phospholipase of a CBASS antiviral system. CBASS (cyclic oligonucleotide-based antiphage signaling system) provides immunity against bacteriophages. The CD-NTase protein (CdnA) synthesizes cyclic nucleotides in response to infection; these serve as specific second messenger signals. The signals activate a diverse range of effectors, leading to bacterial cell death and thus abortive phage infection. A type II-A(GA) CBASS system. Functionally, phospholipase that is activated upon binding to the cyclic dinucleotide (CDN) second messenger 3',3'-cyclic GMP-AMP (cGAMP). Degrades phospholipids in the cell membrane. The capV-cdnA-cap2-cap3 operon provides about 10(4)-fold protection in strain BWHPSA011 against infection by phage PaMx41. In P.aeruginosa strain PAO1 it confers protection against phages PaMx41 and JBD18 but not JBD67 (JBD18 and JBD67 do not replicate in BWHPSA011 / Pa011). When acb2 in JBD67 is deleted this CBASS operon then protects against JDB67 also. This CBASS system limits prophage induction of lysogenized JBD67 as well as viral lytic replication. This chain is cGAMP-activated phospholipase, found in Pseudomonas aeruginosa (strain BWHPSA011 / Pa011).